Consider the following 195-residue polypeptide: Dehydrin DHN1 (195 aa).

The segment at 1–195 (MAEYGDQYGR…IKEKLPGGHH (195 aa)) is disordered. A compositionally biased stretch (low complexity) spans 37-48 (YGTTGTTVGYGT). Residues 50–64 (QCVTTVTTGAQKTDQ) show a composition bias toward polar residues. Over residues 65–88 (YGTPGTTGAYGTDQYGTTGTTGEY) the composition is skewed to low complexity. 2 stretches are compositionally biased toward basic and acidic residues: residues 136-153 (KEKI…DDQT) and 173-195 (SPEH…GGHH).

Belongs to the plant dehydrin family. In terms of processing, phosphorylated in vitro by CK2. In terms of tissue distribution, expressed in roots and leaves.

It is found in the cytoplasm. The protein resides in the nucleus. The chain is Dehydrin DHN1 from Avicennia marina (Grey mangrove).